Consider the following 220-residue polypeptide: Meiotic nuclear division protein 1 homolog (220 aa).

Residues 76 to 147 (SKALHARKRR…KVEIEKYQEC (72 aa)) are a coiled coil.

This sequence belongs to the MND1 family.

Its subcellular location is the nucleus. In terms of biological role, required for proper homologous chromosome pairing and efficient cross-over and intragenic recombination during meiosis. Stimulates both DMC1- and RAD51-mediated homologous strand assimilation, which is required for the resolution of meiotic double-strand breaks. In Danio rerio (Zebrafish), this protein is Meiotic nuclear division protein 1 homolog.